A 372-amino-acid polypeptide reads, in one-letter code: D-alanine--D-alanine ligase (372 aa).

In terms of domain architecture, ATP-grasp spans 145-349 (KTVLRAGGIP…CPNLLDQLIE (205 aa)). 176–231 (DRWGTSELFVKAVSLGSSVATLPVKTETEFTKAVKEVFRYDDRLMVEPRIRGREIE) lines the ATP pocket. Positions 303, 316, and 318 each coordinate Mg(2+).

It belongs to the D-alanine--D-alanine ligase family. Mg(2+) is required as a cofactor. It depends on Mn(2+) as a cofactor.

The protein resides in the cytoplasm. It carries out the reaction 2 D-alanine + ATP = D-alanyl-D-alanine + ADP + phosphate + H(+). The protein operates within cell wall biogenesis; peptidoglycan biosynthesis. Its function is as follows. Cell wall formation. The polypeptide is D-alanine--D-alanine ligase (Coxiella burnetii (strain RSA 331 / Henzerling II)).